The following is a 215-amino-acid chain: Outer-membrane lipoprotein carrier protein (215 aa).

Residues 1-24 (MFVLKARHLMAAGLVSLAAWSAGA) form the signal peptide.

It belongs to the LolA family. As to quaternary structure, monomer.

It localises to the periplasm. Participates in the translocation of lipoproteins from the inner membrane to the outer membrane. Only forms a complex with a lipoprotein if the residue after the N-terminal Cys is not an aspartate (The Asp acts as a targeting signal to indicate that the lipoprotein should stay in the inner membrane). This is Outer-membrane lipoprotein carrier protein from Ralstonia nicotianae (strain ATCC BAA-1114 / GMI1000) (Ralstonia solanacearum).